The following is a 281-amino-acid chain: Nucleoid occlusion protein (281 aa).

The tract at residues methionine 1 to glutamate 24 is disordered. The H-T-H motif DNA-binding region spans glutamate 145–leucine 164.

It belongs to the ParB family.

It localises to the cytoplasm. The protein localises to the nucleoid. In terms of biological role, effects nucleoid occlusion by binding relatively nonspecifically to DNA and preventing the assembly of the division machinery in the vicinity of the nucleoid, especially under conditions that disturb the cell cycle. It helps to coordinate cell division and chromosome segregation by preventing the formation of the Z ring through the nucleoid, which would cause chromosome breakage. The protein is Nucleoid occlusion protein of Geobacillus kaustophilus (strain HTA426).